The chain runs to 316 residues: Probable protein-L-isoaspartate O-methyltransferase (316 aa).

S-adenosyl-L-homocysteine-binding positions include 103 to 106, H111, S136, 157 to 158, 187 to 188, T263, and Q268; these read ATIS, EH, and DG. The active site involves S106.

This sequence belongs to the methyltransferase superfamily. L-isoaspartyl/D-aspartyl protein methyltransferase family.

The protein resides in the cytoplasm. It is found in the cytosol. It catalyses the reaction [protein]-L-isoaspartate + S-adenosyl-L-methionine = [protein]-L-isoaspartate alpha-methyl ester + S-adenosyl-L-homocysteine. Initiates the repair of damaged proteins by catalyzing methyl esterification of L-isoaspartyl and D-aspartyl residues produced by spontaneous isomerization and racemization of L-aspartyl and L-asparaginyl residues in aging peptides and proteins. The sequence is that of Probable protein-L-isoaspartate O-methyltransferase (pcmA) from Dictyostelium discoideum (Social amoeba).